Reading from the N-terminus, the 209-residue chain is Large ribosomal subunit protein uL3 (209 aa).

Gln150 is modified (N5-methylglutamine).

The protein belongs to the universal ribosomal protein uL3 family. In terms of assembly, part of the 50S ribosomal subunit. Forms a cluster with proteins L14 and L19. Post-translationally, methylated by PrmB.

One of the primary rRNA binding proteins, it binds directly near the 3'-end of the 23S rRNA, where it nucleates assembly of the 50S subunit. This chain is Large ribosomal subunit protein uL3, found in Vibrio vulnificus (strain YJ016).